A 556-amino-acid chain; its full sequence is Formate--tetrahydrofolate ligase (556 aa).

65 to 72 is an ATP binding site; sequence TPAGEGKS.

This sequence belongs to the formate--tetrahydrofolate ligase family.

The enzyme catalyses (6S)-5,6,7,8-tetrahydrofolate + formate + ATP = (6R)-10-formyltetrahydrofolate + ADP + phosphate. The protein operates within one-carbon metabolism; tetrahydrofolate interconversion. This Streptococcus equi subsp. equi (strain 4047) protein is Formate--tetrahydrofolate ligase.